We begin with the raw amino-acid sequence, 346 residues long: Extracellular protease (346 aa).

The signal sequence occupies residues 1–21 (MMKATPIALLLAGVLASPLCA). His296 serves as a coordination point for Zn(2+). Glu297 is a catalytic residue. Zn(2+)-binding residues include His300 and Asp309.

This sequence belongs to the peptidase M35 family. Requires Zn(2+) as cofactor.

Its function is as follows. Heat-labile protease. The polypeptide is Extracellular protease (Aeromonas hydrophila).